Consider the following 657-residue polypeptide: Histidine ammonia-lyase (657 aa).

The segment at residues 253-255 (ASG) is a cross-link (5-imidazolinone (Ala-Gly)). S254 carries the 2,3-didehydroalanine (Ser) modification. T396 is subject to Phosphothreonine. At S635 the chain carries Phosphoserine. Residue T637 is modified to Phosphothreonine. Phosphoserine is present on S648.

Belongs to the PAL/histidase family. In terms of processing, contains an active site 4-methylidene-imidazol-5-one (MIO), which is formed autocatalytically by cyclization and dehydration of residues Ala-Ser-Gly. As to expression, liver and skin.

The enzyme catalyses L-histidine = trans-urocanate + NH4(+). It participates in amino-acid degradation; L-histidine degradation into L-glutamate; N-formimidoyl-L-glutamate from L-histidine: step 1/3. This is Histidine ammonia-lyase (Hal) from Rattus norvegicus (Rat).